The sequence spans 236 residues: LexA repressor (236 aa).

The tract at residues Met-1 to Ser-25 is disordered. The segment at residues Ile-51–Arg-71 is a DNA-binding region (H-T-H motif). Active-site for autocatalytic cleavage activity residues include Ser-160 and Lys-197.

It belongs to the peptidase S24 family. In terms of assembly, homodimer.

It carries out the reaction Hydrolysis of Ala-|-Gly bond in repressor LexA.. Functionally, represses a number of genes involved in the response to DNA damage (SOS response), including recA and lexA. In the presence of single-stranded DNA, RecA interacts with LexA causing an autocatalytic cleavage which disrupts the DNA-binding part of LexA, leading to derepression of the SOS regulon and eventually DNA repair. The chain is LexA repressor from Mycobacterium bovis (strain BCG / Pasteur 1173P2).